A 602-amino-acid polypeptide reads, in one-letter code: Major facilitator superfamily multidrug transporter mfsB (602 aa).

Transmembrane regions (helical) follow at residues Phe29–Val49, Leu67–Trp87, Pro98–Pro118, Ala128–Val148, Ile160–Ala180, Phe201–Leu221, Ile329–Phe349, Phe378–Val398, Val411–Ile431, Leu439–Leu459, Val468–Leu486, and Ile505–Met525. The tract at residues Glu527 to Asp602 is disordered. The segment covering Ser528–Gly538 has biased composition (basic and acidic residues).

Belongs to the major facilitator superfamily.

The protein localises to the membrane. Major facilitator superfamily transporter that may be involved in A.fumigatus adaptation to azoles such as vorizonazole. In Aspergillus fumigatus (strain ATCC MYA-4609 / CBS 101355 / FGSC A1100 / Af293) (Neosartorya fumigata), this protein is Major facilitator superfamily multidrug transporter mfsB.